The sequence spans 322 residues: Nitrilase (322 aa).

In terms of domain architecture, CN hydrolase spans 5–283 (VRVGAVQSEP…EAILTADIDL (279 aa)). Residue E45 is the Proton acceptor of the active site. K127 is an active-site residue. C162 functions as the Nucleophile in the catalytic mechanism.

Belongs to the carbon-nitrogen hydrolase superfamily. Nitrilase family.

The enzyme catalyses a nitrile + 2 H2O = a carboxylate + NH4(+). Its function is as follows. Nitrilase that hydrolyzes preferentially 4-cyanopyridine. The sequence is that of Nitrilase from Talaromyces marneffei (strain ATCC 18224 / CBS 334.59 / QM 7333) (Penicillium marneffei).